Here is a 123-residue protein sequence, read N- to C-terminus: Small ribosomal subunit protein uS12 (123 aa).

At Asp-89 the chain carries 3-methylthioaspartic acid.

The protein belongs to the universal ribosomal protein uS12 family. In terms of assembly, part of the 30S ribosomal subunit. Contacts proteins S8 and S17. May interact with IF1 in the 30S initiation complex.

In terms of biological role, with S4 and S5 plays an important role in translational accuracy. Its function is as follows. Interacts with and stabilizes bases of the 16S rRNA that are involved in tRNA selection in the A site and with the mRNA backbone. Located at the interface of the 30S and 50S subunits, it traverses the body of the 30S subunit contacting proteins on the other side and probably holding the rRNA structure together. The combined cluster of proteins S8, S12 and S17 appears to hold together the shoulder and platform of the 30S subunit. This is Small ribosomal subunit protein uS12 from Anaeromyxobacter sp. (strain Fw109-5).